Here is a 74-residue protein sequence, read N- to C-terminus: Translation initiation factor IF-1 (74 aa).

Residues 1 to 73 (MAKKDDIIEF…TKGRITYRGK (73 aa)) form the S1-like domain.

The protein belongs to the IF-1 family. Component of the 30S ribosomal translation pre-initiation complex which assembles on the 30S ribosome in the order IF-2 and IF-3, IF-1 and N-formylmethionyl-tRNA(fMet); mRNA recruitment can occur at any time during PIC assembly.

The protein localises to the cytoplasm. Its function is as follows. One of the essential components for the initiation of protein synthesis. Stabilizes the binding of IF-2 and IF-3 on the 30S subunit to which N-formylmethionyl-tRNA(fMet) subsequently binds. Helps modulate mRNA selection, yielding the 30S pre-initiation complex (PIC). Upon addition of the 50S ribosomal subunit IF-1, IF-2 and IF-3 are released leaving the mature 70S translation initiation complex. The sequence is that of Translation initiation factor IF-1 from Psychrobacter sp. (strain PRwf-1).